The sequence spans 153 residues: Ribosome maturation factor RimP (153 aa).

Belongs to the RimP family.

Its subcellular location is the cytoplasm. In terms of biological role, required for maturation of 30S ribosomal subunits. This is Ribosome maturation factor RimP from Solibacter usitatus (strain Ellin6076).